The sequence spans 499 residues: Cytochrome P450 705A12 (499 aa).

The chain crosses the membrane as a helical span at residues 4–24 (LIIVDFQNISIFILLCLFSFL). Position 439 (Cys-439) interacts with heme.

The protein belongs to the cytochrome P450 family. The cofactor is heme.

Its subcellular location is the membrane. May be involved in hydroxylation of the triterpene marneral. This Arabidopsis thaliana (Mouse-ear cress) protein is Cytochrome P450 705A12.